Here is a 228-residue protein sequence, read N- to C-terminus: Urease accessory protein UreE (228 aa).

The interval 193–228 is disordered; it reads HGSGLHIHGIHSHGDGHSHSHDDHDHDHNHDHDHKH. The segment covering 204-228 has biased composition (basic and acidic residues); sequence SHGDGHSHSHDDHDHDHNHDHDHKH.

This sequence belongs to the UreE family.

Its subcellular location is the cytoplasm. Its function is as follows. Involved in urease metallocenter assembly. Binds nickel. Probably functions as a nickel donor during metallocenter assembly. This is Urease accessory protein UreE from Yersinia rohdei.